Reading from the N-terminus, the 891-residue chain is DNA mismatch repair protein MutS (891 aa).

ATP is bound at residue 646-653; that stretch reads GPNMAGKS.

The protein belongs to the DNA mismatch repair MutS family.

Functionally, this protein is involved in the repair of mismatches in DNA. It is possible that it carries out the mismatch recognition step. This protein has a weak ATPase activity. This chain is DNA mismatch repair protein MutS, found in Rickettsia canadensis (strain McKiel).